The primary structure comprises 2188 residues: Glutamate synthase 2 [NADH], chloroplastic (2188 aa).

The N-terminal 30 residues, 1-30 (MSAAQGLALKLRAAPAAGGVRGEKRRRAAS), are a transit peptide targeting the chloroplast. Disordered regions lie at residues 14–40 (APAA…ARPR) and 61–94 (VAPR…PESS). Positions 65 to 80 (ASASRQAEAGAGAGAA) are enriched in low complexity. C107 serves as the catalytic Nucleophile. Residues 107 to 511 (CGVGFIAELS…PGMMLLVDFE (405 aa)) form the Glutamine amidotransferase type-2 domain. FMN is bound at residue 1198–1255 (LAETHQTLVANGLRGRAVLQTDGQMKTGRDVAVACLLGAEEFGFSTAPLITLGCIMMR). [3Fe-4S] cluster-binding residues include C1251, C1257, and C1262. 1974–1988 (GGGDTGTDCIGTSIR) provides a ligand contact to NAD(+).

This sequence belongs to the glutamate synthase family. As to quaternary structure, monomer. [3Fe-4S] cluster serves as cofactor. It depends on FAD as a cofactor. The cofactor is FMN. In terms of tissue distribution, expressed in leaf blades and sheaths.

The protein localises to the plastid. Its subcellular location is the chloroplast. It carries out the reaction 2 L-glutamate + NAD(+) = L-glutamine + 2-oxoglutarate + NADH + H(+). It participates in amino-acid biosynthesis; L-glutamate biosynthesis via GLT pathway; L-glutamate from 2-oxoglutarate and L-glutamine (NAD(+) route): step 1/1. It functions in the pathway energy metabolism; nitrogen metabolism. In terms of biological role, involved in glutamate biosynthesis. The polypeptide is Glutamate synthase 2 [NADH], chloroplastic (Oryza sativa subsp. japonica (Rice)).